The chain runs to 85 residues: Homeobox protein knotted-1-like 5 (85 aa).

Positions 1-21 (ELKEMLLKKYSGCLSRLRSEF) constitute an ELK domain. Residues 22–85 (LKKRKKGKLP…NQRKRHWKPS (64 aa)) constitute a DNA-binding region (homeobox; TALE-type).

Belongs to the TALE/KNOX homeobox family. Strongly expressed in ear inflorescence primordia and shoot meristem. Weakly expressed in embryos. Absent from leaves.

It localises to the nucleus. Probably binds to the DNA sequence 5'-TGAC-3'. The polypeptide is Homeobox protein knotted-1-like 5 (KNOX5) (Zea mays (Maize)).